The chain runs to 203 residues: Outer-membrane lipoprotein carrier protein (203 aa).

Residues 1-21 (MKKQLMTSCLFAAVLAAPAFA) form the signal peptide.

It belongs to the LolA family. In terms of assembly, monomer.

It is found in the periplasm. Its function is as follows. Participates in the translocation of lipoproteins from the inner membrane to the outer membrane. Only forms a complex with a lipoprotein if the residue after the N-terminal Cys is not an aspartate (The Asp acts as a targeting signal to indicate that the lipoprotein should stay in the inner membrane). The protein is Outer-membrane lipoprotein carrier protein of Sodalis glossinidius (strain morsitans).